Consider the following 406-residue polypeptide: 2,3-bisphosphoglycerate-independent phosphoglycerate mutase (406 aa).

The protein belongs to the BPG-independent phosphoglycerate mutase family. A-PGAM subfamily.

It carries out the reaction (2R)-2-phosphoglycerate = (2R)-3-phosphoglycerate. The protein operates within carbohydrate degradation; glycolysis; pyruvate from D-glyceraldehyde 3-phosphate: step 3/5. Its function is as follows. Catalyzes the interconversion of 2-phosphoglycerate and 3-phosphoglycerate. The sequence is that of 2,3-bisphosphoglycerate-independent phosphoglycerate mutase from Methanococcus maripaludis (strain C5 / ATCC BAA-1333).